The primary structure comprises 863 residues: MKALRRFTVRAHLPERLAALDQLSTNLRWSWDKPTQDLFAAIDPALWEQCGHDPVALLGAVNPARLDELALDAEFLGALDELAADLNDYLSRPLWYQEQQDAGVAAQALPTGIAYFSLEFGVAEVLPNYSGGLGILAGDHLKSASDLGVPLIAVGLYYRSGYFRQSLTADGWQHETYPSLDPQGLPLRLLTDANGDPVLVEVALGDNAVLRARIWVAQVGRVPLLLLDSDIPENEHDLRNVTDRLYGGDQEHRIKQEILAGIGGVRAIRAYTAVEKLTPPEVFHMNEGHAGFLGIERIRELVTDAGLDFDTALTVVRSSTVFTTHTPVPAGIDRFPLEMVQRYVNDQRGDGRSRLLPGLPADRIVALGAEDDPAKFNMAHMGLRLAQRANGVSLLHGRVSRAMFNELWAGFDPDEVPIGSVTNGVHAPTWAAPQWLQLGRELAGSDSLREPVVWQRLHQVDPAHLWWIRSQLRSMLVEDVRARLRQSWLERGATDAELGWIATAFDPNVLTVGFARRVPTYKRLTLMLRDPGRLEQLLLDEQRPIQLIVAGKSHPADDGGKALIQQVVRFADRPQFRHRIAFLPNYDMSMARLLYWGCDVWLNNPLRPLEACGTSGMKSALNGGLNLSIRDGWWDEWYDGENGWEIPSADGVADENRRDDLEAGALYDLLAQAVAPKFYERDERGVPQRWVEMVRHTLQTLGPKVLASRMVRDYVEHYYAPAAQSFRRTAGAQFDAARELADYRRRAEEAWPKIEIADVDSTGLPDTPLLGSQLTLTATVRLAGLRPNDVTVQGVLGRVDSGDVLMDPVTVEMAHTGTGDGGYEIFSTTTPLPLAGPVGYTVRVLPRHPMLAASNELGLVTLA.

Residue Lys618 is modified to N6-(pyridoxal phosphate)lysine.

The protein belongs to the glycogen phosphorylase family. The cofactor is pyridoxal 5'-phosphate.

The enzyme catalyses [(1-&gt;4)-alpha-D-glucosyl](n) + phosphate = [(1-&gt;4)-alpha-D-glucosyl](n-1) + alpha-D-glucose 1-phosphate. Its function is as follows. Phosphorylase is an important allosteric enzyme in carbohydrate metabolism. Enzymes from different sources differ in their regulatory mechanisms and in their natural substrates. However, all known phosphorylases share catalytic and structural properties. The protein is Glycogen phosphorylase (glgP) of Mycobacterium bovis (strain ATCC BAA-935 / AF2122/97).